Here is a 604-residue protein sequence, read N- to C-terminus: MLRTHSLGELNASLIGQTVTVTGWVARRRDHGGVAFVDLRDASGFAQVVVRDEADFDPLRNEWVLQVTGTVERRPEGNENPNLPSGEIELIAETVTVLNTAAALPFQVDEHVEVGEEARLRHRYLDLRRPQPSRIMRLRSEVNRTARELLHGEGFVEVETPTLTRSTPEGARDFLVPARLAPGSWYALPQSPQLFKQLLQVGGIEKYYQIARCYRDEDFRADRQPEFTQLDIEASFVEQDDVIALGEKIVKALWALVGVDVPTPIRRMTYAEAMEKYGSDKPDLRFGLELTDLTEYFKDTPFRVFQNEYVGAVVMPGGASQARRTLDAWQEWAKQRGAKGLAYVLIQEDGELTGPVSKNISEEEKAGLAAAVGANPGDCVFFAAGKPKESRALLGAARVEIGRRCGLFTDAGDGVAAKDADWAFVWVVDAPMFEPAADAVASGDVAVGAGAWTAVHHAFTSPKPEFADTFDADPGSALAYAYDIVCNGNEIGGGSIRIHRRDVQERVFEVMGLSPEEANEKFGFLLEGFKYGAPPHGGIAFGWDRVVALLAGTDSIREVIAFPKTGGGFDPLTGAPAPITAQQRKEAGVDAQPEPKQAEAEPEA.

Glutamate 169 serves as a coordination point for L-aspartate. Residues 193–196 (QLFK) form an aspartate region. Position 215 (arginine 215) interacts with L-aspartate. ATP is bound by residues 215 to 217 (RDE) and glutamine 224. Histidine 456 is a binding site for L-aspartate. Glutamate 490 serves as a coordination point for ATP. Arginine 497 lines the L-aspartate pocket. Residue 542 to 545 (GWDR) participates in ATP binding. Positions 571 to 604 (PLTGAPAPITAQQRKEAGVDAQPEPKQAEAEPEA) are disordered.

Belongs to the class-II aminoacyl-tRNA synthetase family. Type 1 subfamily. In terms of assembly, homodimer.

It localises to the cytoplasm. The catalysed reaction is tRNA(Asx) + L-aspartate + ATP = L-aspartyl-tRNA(Asx) + AMP + diphosphate. Functionally, aspartyl-tRNA synthetase with relaxed tRNA specificity since it is able to aspartylate not only its cognate tRNA(Asp) but also tRNA(Asn). Reaction proceeds in two steps: L-aspartate is first activated by ATP to form Asp-AMP and then transferred to the acceptor end of tRNA(Asp/Asn). This is Aspartate--tRNA(Asp/Asn) ligase from Micrococcus luteus (strain ATCC 4698 / DSM 20030 / JCM 1464 / CCM 169 / CCUG 5858 / IAM 1056 / NBRC 3333 / NCIMB 9278 / NCTC 2665 / VKM Ac-2230) (Micrococcus lysodeikticus).